The primary structure comprises 691 residues: Pentatricopeptide repeat-containing protein At4g37170 (691 aa).

PPR repeat units follow at residues 84–118 (PAST…GFVP), 119–149 (GIVI…MPNR), 150–184 (DLCS…DSYS), 185–211 (WTAM…MQRV), 217–251 (NIFT…GLDS), 252–286 (DEVL…DVVS), 287–317 (WTSM…CERP), 318–352 (NEYT…GFDP), 353–383 (YSFA…CPKP), 384–418 (DLVS…GTKP), 419–449 (DHVT…ITEK), and 455–485 (TSDH…MPMK). Positions 490 to 565 (LWASVLGGCS…RPGSSWTEIK (76 aa)) are type E motif. The interval 566 to 596 (RKRHVFIAADTSHPMYNQIVEFLRELRKKMK) is type E(+) motif. Positions 597–691 (EEGYVPATSL…NGQCSCGDYW (95 aa)) are type DYW motif.

The protein belongs to the PPR family. PCMP-H subfamily.

The polypeptide is Pentatricopeptide repeat-containing protein At4g37170 (PCMP-H5) (Arabidopsis thaliana (Mouse-ear cress)).